A 159-amino-acid chain; its full sequence is NADH-quinone oxidoreductase subunit B (159 aa).

[4Fe-4S] cluster contacts are provided by C32, C33, C97, and C126.

This sequence belongs to the complex I 20 kDa subunit family. In terms of assembly, NDH-1 is composed of 14 different subunits. Subunits NuoB, C, D, E, F, and G constitute the peripheral sector of the complex. Requires [4Fe-4S] cluster as cofactor.

Its subcellular location is the cell inner membrane. The catalysed reaction is a quinone + NADH + 5 H(+)(in) = a quinol + NAD(+) + 4 H(+)(out). Its function is as follows. NDH-1 shuttles electrons from NADH, via FMN and iron-sulfur (Fe-S) centers, to quinones in the respiratory chain. The immediate electron acceptor for the enzyme in this species is believed to be ubiquinone. Couples the redox reaction to proton translocation (for every two electrons transferred, four hydrogen ions are translocated across the cytoplasmic membrane), and thus conserves the redox energy in a proton gradient. The sequence is that of NADH-quinone oxidoreductase subunit B from Helicobacter pylori (strain P12).